Consider the following 349-residue polypeptide: Adenine deaminase (349 aa).

Positions 24, 26, and 204 each coordinate Zn(2+). The Proton donor role is filled by E207. D285 contacts Zn(2+). D286 contacts substrate.

The protein belongs to the metallo-dependent hydrolases superfamily. Adenosine and AMP deaminases family. Adenine deaminase type 2 subfamily. Zn(2+) serves as cofactor.

The catalysed reaction is adenine + H2O + H(+) = hypoxanthine + NH4(+). Functionally, catalyzes the hydrolytic deamination of adenine to hypoxanthine. Plays an important role in the purine salvage pathway and in nitrogen catabolism. The sequence is that of Adenine deaminase from Trichlorobacter lovleyi (strain ATCC BAA-1151 / DSM 17278 / SZ) (Geobacter lovleyi).